A 316-amino-acid polypeptide reads, in one-letter code: Ornithine carbamoyltransferase (316 aa).

Residues 59–62 (STRT), Gln-86, Arg-110, and 137–140 (HPCQ) contribute to the carbamoyl phosphate site. L-ornithine-binding positions include Asn-168, Asp-232, and 236–237 (SM). Residues 273 to 274 (CL) and Arg-301 each bind carbamoyl phosphate.

The protein belongs to the aspartate/ornithine carbamoyltransferase superfamily. OTCase family.

The protein localises to the cytoplasm. It catalyses the reaction carbamoyl phosphate + L-ornithine = L-citrulline + phosphate + H(+). The protein operates within amino-acid biosynthesis; L-arginine biosynthesis; L-arginine from L-ornithine and carbamoyl phosphate: step 1/3. Reversibly catalyzes the transfer of the carbamoyl group from carbamoyl phosphate (CP) to the N(epsilon) atom of ornithine (ORN) to produce L-citrulline. In Listeria innocua serovar 6a (strain ATCC BAA-680 / CLIP 11262), this protein is Ornithine carbamoyltransferase.